The primary structure comprises 275 residues: uncharacterized protein (275 aa).

The [4Fe-4S] cluster site is built by Cys-97, Cys-102, Cys-136, and Cys-140. Cys-140 contributes to the siroheme binding site.

The protein belongs to the nitrite and sulfite reductase 4Fe-4S domain family.

This is an uncharacterized protein from Methanocaldococcus jannaschii (strain ATCC 43067 / DSM 2661 / JAL-1 / JCM 10045 / NBRC 100440) (Methanococcus jannaschii).